The chain runs to 422 residues: 2,3-bisphosphoglycerate-independent phosphoglycerate mutase (422 aa).

A disordered region spans residues 173-194 (DADPKRVGKPVKDVKPTSDDPA). Basic and acidic residues predominate over residues 174–190 (ADPKRVGKPVKDVKPTS).

The protein belongs to the BPG-independent phosphoglycerate mutase family. A-PGAM subfamily.

The catalysed reaction is (2R)-2-phosphoglycerate = (2R)-3-phosphoglycerate. It participates in carbohydrate degradation; glycolysis; pyruvate from D-glyceraldehyde 3-phosphate: step 3/5. Catalyzes the interconversion of 2-phosphoglycerate and 3-phosphoglycerate. The sequence is that of 2,3-bisphosphoglycerate-independent phosphoglycerate mutase from Methanopyrus kandleri (strain AV19 / DSM 6324 / JCM 9639 / NBRC 100938).